The primary structure comprises 381 residues: MNLNFMPLLHAYNHASIDFHFNSSARDFCVHEVPLYEFSNTGEHAVIQVRKSGLSTLEMLHIFSQILGVKIAELGYAGLKDKNALTTQFISLPKKYAPLLEKNTSNFQERNLKVLSLNYHHNKIKLGHLKGNRFFMRFKKMTPLNAQKTKQVLEQIAQFGMPNYFGSQRFGKFNDNHKEGLKILQNKTKFAHQKLNAFLISSYQSYLFNSLLSKRLEISKIISDFSVKENLEFFKQKNLSVNSNALKALKNQAHPFKILEGDVMCHYPYGKFFDALKLEKESERFLKKEAVPTGLLDGKKALYAKNLSLEIEKEFQHNLLSSHAKTLGSRRFFWVFAENVTSQYIKEKAQFELGFYLPKGSYASALLKEIKHEKGENNDEF.

Asp81 serves as the catalytic Nucleophile. Positions 160–335 (GMPNYFGSQR…TLGSRRFFWV (176 aa)) constitute a TRUD domain.

This sequence belongs to the pseudouridine synthase TruD family.

It catalyses the reaction uridine(13) in tRNA = pseudouridine(13) in tRNA. Responsible for synthesis of pseudouridine from uracil-13 in transfer RNAs. In Helicobacter pylori (strain G27), this protein is tRNA pseudouridine synthase D.